A 318-amino-acid chain; its full sequence is MSNKSNDNGRAYEFAFINELGRIATQNQNINIEKNSSYYVVEKSWSTLSDLEKEKYTKSAIAGINLITSLEPIIEDGNGVLNLKIQADNKGELGDIRDILIQRENINWEIGLSLKHNHFAVKHSRLSHKIDFSEKWFQLPSSQNYWDNILPIFEKLEIYKKDKIKWRELSNKEDCIYYPILKSFIAEIKEKYDKYNSIVPQRMVEYLLGYFDFYKIISQDNKKLTSIQSFNLRGTLNKPSKKRKADIFIPVANLPTRIIDIDFKPNSKNTVELYLDKGWQFSFRIHNASTIIEPSLKFDIKLIGVPATIICLETPWEE.

It catalyses the reaction Endonucleolytic cleavage of DNA to give specific double-stranded fragments with terminal 5'-phosphates.. A P subtype restriction enzyme that recognizes the double-stranded sequence 5'-GGCC-3' and cleaves after G-2. The polypeptide is Type II restriction enzyme HaeIII (haeIIIR) (Haemophilus aegyptius).